The primary structure comprises 449 residues: UDP-N-acetylmuramate--L-alanine ligase (449 aa).

110–116 (GTHGKTT) contacts ATP.

This sequence belongs to the MurCDEF family.

Its subcellular location is the cytoplasm. It carries out the reaction UDP-N-acetyl-alpha-D-muramate + L-alanine + ATP = UDP-N-acetyl-alpha-D-muramoyl-L-alanine + ADP + phosphate + H(+). It participates in cell wall biogenesis; peptidoglycan biosynthesis. Functionally, cell wall formation. This is UDP-N-acetylmuramate--L-alanine ligase from Desulfitobacterium hafniense (strain Y51).